The primary structure comprises 335 residues: Anthranilate phosphoribosyltransferase (335 aa).

5-phospho-alpha-D-ribose 1-diphosphate-binding positions include Gly-79, 82 to 83, Thr-87, 89 to 92, 107 to 115, and Ser-119; these read GD, NIST, and KHCNQGVSS. Gly-79 provides a ligand contact to anthranilate. Ser-91 is a binding site for Mg(2+). Asn-110 provides a ligand contact to anthranilate. Residue Arg-165 participates in anthranilate binding. Mg(2+)-binding residues include Asp-223 and Glu-224.

This sequence belongs to the anthranilate phosphoribosyltransferase family. In terms of assembly, homodimer. It depends on Mg(2+) as a cofactor.

It carries out the reaction N-(5-phospho-beta-D-ribosyl)anthranilate + diphosphate = 5-phospho-alpha-D-ribose 1-diphosphate + anthranilate. It participates in amino-acid biosynthesis; L-tryptophan biosynthesis; L-tryptophan from chorismate: step 2/5. Functionally, catalyzes the transfer of the phosphoribosyl group of 5-phosphorylribose-1-pyrophosphate (PRPP) to anthranilate to yield N-(5'-phosphoribosyl)-anthranilate (PRA). In Buchnera aphidicola subsp. Diuraphis noxia, this protein is Anthranilate phosphoribosyltransferase.